The chain runs to 440 residues: Xylose isomerase (440 aa).

Active-site residues include His101 and Asp104. Mg(2+)-binding residues include Glu232, Glu268, His271, Asp296, Asp307, Asp309, and Asp339.

Belongs to the xylose isomerase family. In terms of assembly, homotetramer. Requires Mg(2+) as cofactor.

It localises to the cytoplasm. It carries out the reaction alpha-D-xylose = alpha-D-xylulofuranose. The polypeptide is Xylose isomerase (Escherichia fergusonii (strain ATCC 35469 / DSM 13698 / CCUG 18766 / IAM 14443 / JCM 21226 / LMG 7866 / NBRC 102419 / NCTC 12128 / CDC 0568-73)).